We begin with the raw amino-acid sequence, 121 residues long: Probable tail terminator protein (121 aa).

Belongs to the Skunalikevirus tail terminator protein family. Homohexamer. Interacts with the tail tube protein.

Its subcellular location is the virion. Functionally, plays an essential role in tail assembly by capping the rapidly polymerizing tail once it has reached its requisite length and serving as the interaction surface for the connector and the tail tube proteins. This chain is Probable tail terminator protein, found in Lactococcus lactis (Lactococcus lactis bacteriophage p2).